A 417-amino-acid polypeptide reads, in one-letter code: C6 finger transcription factor traC (417 aa).

A disordered region spans residues 1-40 (MNFSEQFTGRSEPGRKANRTSNNNTNSTTNVATVTTDDSN). Residues 19-37 (RTSNNNTNSTTNVATVTTD) show a composition bias toward low complexity. Residues 44-73 (CDRCKGQKLRCIWENGSNTCRRCTRARAVC) constitute a DNA-binding region (zn(2)-C6 fungal-type). Disordered stretches follow at residues 75 to 94 (QPRPRPFGRPRCSTKSKHHV) and 104 to 128 (WVSSTTQQPQENDAEMPMATSDDHD). Residues 80–94 (PFGRPRCSTKSKHHV) show a composition bias toward basic residues. Over residues 104–114 (WVSSTTQQPQE) the composition is skewed to polar residues.

Its subcellular location is the nucleus. In terms of biological role, C6 finger transcription factor; part of the tra gene cluster that produces terrestric acid. The clavatol biosynthesis cluster cla and the terrestric acid cluster tra are both involved in the production of peniphenones and penilactones. This Penicillium crustosum (Blue mold fungus) protein is C6 finger transcription factor traC.